Here is a 253-residue protein sequence, read N- to C-terminus: Amino-acid-binding protein AabA (253 aa).

An N-terminal signal peptide occupies residues 1–23; that stretch reads MPFLKTLFRGALCSIACGASLFC.

It belongs to the bacterial solute-binding protein 3 family.

It localises to the periplasm. In Dichelobacter nodosus (Bacteroides nodosus), this protein is Amino-acid-binding protein AabA (aabA).